The following is a 360-amino-acid chain: UDP-N-acetylglucosamine--N-acetylmuramyl-(pentapeptide) pyrophosphoryl-undecaprenol N-acetylglucosamine transferase (360 aa).

2 residues coordinate UDP-N-acetyl-alpha-D-glucosamine: Ser198 and Gln289.

It belongs to the glycosyltransferase 28 family. MurG subfamily.

It is found in the cell membrane. The enzyme catalyses Mur2Ac(oyl-L-Ala-gamma-D-Glu-L-Lys-D-Ala-D-Ala)-di-trans,octa-cis-undecaprenyl diphosphate + UDP-N-acetyl-alpha-D-glucosamine = beta-D-GlcNAc-(1-&gt;4)-Mur2Ac(oyl-L-Ala-gamma-D-Glu-L-Lys-D-Ala-D-Ala)-di-trans,octa-cis-undecaprenyl diphosphate + UDP + H(+). Its pathway is cell wall biogenesis; peptidoglycan biosynthesis. In terms of biological role, cell wall formation. Catalyzes the transfer of a GlcNAc subunit on undecaprenyl-pyrophosphoryl-MurNAc-pentapeptide (lipid intermediate I) to form undecaprenyl-pyrophosphoryl-MurNAc-(pentapeptide)GlcNAc (lipid intermediate II). This Streptococcus pyogenes serotype M49 (strain NZ131) protein is UDP-N-acetylglucosamine--N-acetylmuramyl-(pentapeptide) pyrophosphoryl-undecaprenol N-acetylglucosamine transferase.